Here is a 1755-residue protein sequence, read N- to C-terminus: Transposon Ty1-ER2 Gag-Pol polyprotein (1755 aa).

Polar residues-rich tracts occupy residues 1-10 (MESQQLSNYP), 48-60 (TKANSQQTTTPAS), and 127-152 (QSQFPQYPSSVGTPLSTPSPESGNTF). Disordered stretches follow at residues 1–93 (MESQ…MMTQ), 126–173 (PQSQ…RPPP), and 352–421 (GSRN…SKST). A compositionally biased stretch (low complexity) spans 153-165 (TDSSSADSDMTST). The RNA-binding stretch occupies residues 299 to 401 (NNGIHINNKV…NSKSKTARAH (103 aa)). Residues 402–418 (NVSTSNNSPSTDNDSIS) are compositionally biased toward low complexity. The For protease activity; shared with dimeric partner role is filled by aspartate 461. The integrase-type zinc finger-like stretch occupies residues 583 to 640 (NVHTSESTRKYPYPFIHRMLAHANAQTIRYSLKNNTITYFNESDVDWSSAIDYQCPDC). In terms of domain architecture, Integrase catalytic spans 660–835 (NSYEPFQYLH…AGLDISTLLP (176 aa)). Positions 671 and 736 each coordinate Mg(2+). Positions 958-1170 (AVSPTDSTPP…SSLGGIGDSN (213 aa)) are disordered. The segment covering 960 to 969 (SPTDSTPPST) has biased composition (low complexity). Residues 1005 to 1015 (STPQISDIEST) show a composition bias toward polar residues. Positions 1038-1053 (ESSHASKSKDFRHSDS) are enriched in basic and acidic residues. 2 stretches are compositionally biased toward polar residues: residues 1054 to 1082 (YSDNETNHTNVPISSTGGTNNKTVPQTSE) and 1095 to 1106 (SIDTSSSESNSL). The Bipartite nuclear localization signal signature appears at 1178-1212 (KKRSLEDNETEIKVSRDTWNTKNMRSLEPPRSKKR). The region spanning 1338-1476 (NNYYITQLDI…DILGLEIKYQ (139 aa)) is the Reverse transcriptase Ty1/copia-type domain. Mg(2+)-binding residues include aspartate 1346, aspartate 1427, aspartate 1428, aspartate 1610, glutamate 1652, and aspartate 1685. An RNase H Ty1/copia-type domain is found at 1610–1752 (DASYGNQPYY…IKTFKLLTNK (143 aa)).

The capsid protein forms a homotrimer, from which the VLPs are assembled. The protease is a homodimer, whose active site consists of two apposed aspartic acid residues. Initially, virus-like particles (VLPs) are composed of the structural unprocessed proteins Gag and Gag-Pol, and also contain the host initiator methionine tRNA (tRNA(i)-Met) which serves as a primer for minus-strand DNA synthesis, and a dimer of genomic Ty RNA. Processing of the polyproteins occurs within the particle and proceeds by an ordered pathway, called maturation. First, the protease (PR) is released by autocatalytic cleavage of the Gag-Pol polyprotein yielding capsid protein p45 and a Pol-p154 precursor protein. This cleavage is a prerequisite for subsequent processing of Pol-p154 at the remaining sites to release the mature structural and catalytic proteins. Maturation takes place prior to the RT reaction and is required to produce transposition-competent VLPs.

Its subcellular location is the cytoplasm. The protein localises to the nucleus. It carries out the reaction DNA(n) + a 2'-deoxyribonucleoside 5'-triphosphate = DNA(n+1) + diphosphate. The enzyme catalyses Endonucleolytic cleavage to 5'-phosphomonoester.. Its function is as follows. Capsid protein (CA) is the structural component of the virus-like particle (VLP), forming the shell that encapsulates the retrotransposons dimeric RNA genome. The particles are assembled from trimer-clustered units and there are holes in the capsid shells that allow for the diffusion of macromolecules. CA also has nucleocapsid-like chaperone activity, promoting primer tRNA(i)-Met annealing to the multipartite primer-binding site (PBS), dimerization of Ty1 RNA and initiation of reverse transcription. The aspartyl protease (PR) mediates the proteolytic cleavages of the Gag and Gag-Pol polyproteins after assembly of the VLP. Functionally, reverse transcriptase/ribonuclease H (RT) is a multifunctional enzyme that catalyzes the conversion of the retro-elements RNA genome into dsDNA within the VLP. The enzyme displays a DNA polymerase activity that can copy either DNA or RNA templates, and a ribonuclease H (RNase H) activity that cleaves the RNA strand of RNA-DNA heteroduplexes during plus-strand synthesis and hydrolyzes RNA primers. The conversion leads to a linear dsDNA copy of the retrotransposon that includes long terminal repeats (LTRs) at both ends. In terms of biological role, integrase (IN) targets the VLP to the nucleus, where a subparticle preintegration complex (PIC) containing at least integrase and the newly synthesized dsDNA copy of the retrotransposon must transit the nuclear membrane. Once in the nucleus, integrase performs the integration of the dsDNA into the host genome. This chain is Transposon Ty1-ER2 Gag-Pol polyprotein (TY1B-ER2), found in Saccharomyces cerevisiae (strain ATCC 204508 / S288c) (Baker's yeast).